A 406-amino-acid polypeptide reads, in one-letter code: Sensor histidine kinase YxjM (406 aa).

Over 1–13 (MNGQTPARHYYKK) the chain is Cytoplasmic. A helical transmembrane segment spans residues 14–34 (LVPSLILILNCIQFLSHPTKA). Topologically, residues 35 to 36 (DP) are extracellular. The chain crosses the membrane as a helical span at residues 37–57 (ILLAFVFAVYLAFIWIIPYVA). Ser-58 is a topological domain (cytoplasmic). 2 helical membrane passes run 59–79 (TAVSLSIFIGLWLLTDFFWAV) and 80–100 (SGQEQGAAYFLIVFLMIYAAF). Arg-101 is a topological domain (cytoplasmic). Residues 102–122 (LPSRLSLIFTACLIGGNILLL) form a helical membrane-spanning segment. The Extracellular segment spans residues 123 to 125 (SSQ). Residues 126–146 (GGSLNTIISNISIMLGLYVLF) traverse the membrane as a helical segment. The Cytoplasmic segment spans residues 147–406 (SSMRFRREAR…TNKEQKDEQR (260 aa)). The Histidine kinase domain occupies 209-396 (DIHDSIGHEL…KIELSLPLMT (188 aa)). Phosphohistidine; by autocatalysis is present on His-211.

The protein localises to the cell membrane. The enzyme catalyses ATP + protein L-histidine = ADP + protein N-phospho-L-histidine.. In terms of biological role, probable member of the two-component regulatory system YxjM/YxjL. May activate YxjL by phosphorylation. The sequence is that of Sensor histidine kinase YxjM (yxjM) from Bacillus subtilis (strain 168).